A 159-amino-acid polypeptide reads, in one-letter code: Probable minor fimbrial protein (159 aa).

Positions 1–6 (MKKMHG) are cleaved as a propeptide — leader sequence. Phe7 bears the N-methylphenylalanine mark. The chain crosses the membrane as a helical span at residues 7-29 (FTLIELMIVVAIIGVLASIALMQ). 2 disulfides stabilise this stretch: Cys56–Cys71 and Cys140–Cys153.

This sequence belongs to the N-Me-Phe pilin family. As to quaternary structure, the pili are polar flexible filaments of about 5.4 nanometers diameter and 2.5 micrometers average length; they consist of only a single polypeptide chain arranged in a helical configuration of five subunits per turn in the assembled pilus.

It is found in the fimbrium. Its subcellular location is the membrane. This Dichelobacter nodosus (Bacteroides nodosus) protein is Probable minor fimbrial protein (fimZ).